The chain runs to 167 residues: uncharacterized protein (167 aa).

To A.thaliana At2g20940.

This is an uncharacterized protein from Schizosaccharomyces pombe (strain 972 / ATCC 24843) (Fission yeast).